The chain runs to 171 residues: Large ribosomal subunit protein uL10 (171 aa).

Belongs to the universal ribosomal protein uL10 family. Part of the ribosomal stalk of the 50S ribosomal subunit. The N-terminus interacts with L11 and the large rRNA to form the base of the stalk. The C-terminus forms an elongated spine to which L12 dimers bind in a sequential fashion forming a multimeric L10(L12)X complex.

Functionally, forms part of the ribosomal stalk, playing a central role in the interaction of the ribosome with GTP-bound translation factors. The polypeptide is Large ribosomal subunit protein uL10 (Hyphomonas neptunium (strain ATCC 15444)).